A 491-amino-acid chain; its full sequence is Ketol-acid reductoisomerase (NADP(+)) (491 aa).

Positions 15–208 (AQLGKCRFMA…GGHRAGVLES (194 aa)) constitute a KARI N-terminal Rossmann domain. Residues 45 to 48 (CGAQ), arginine 68, arginine 76, serine 78, and 108 to 110 (DKQ) each bind NADP(+). Residue histidine 132 is part of the active site. Residue glycine 158 participates in NADP(+) binding. KARI C-terminal knotted domains are found at residues 209–344 (SFVA…TAPQ) and 345–484 (YEGK…MTDM). 4 residues coordinate Mg(2+): aspartate 217, glutamate 221, glutamate 389, and glutamate 393. Serine 414 provides a ligand contact to substrate.

This sequence belongs to the ketol-acid reductoisomerase family. Mg(2+) serves as cofactor.

The catalysed reaction is (2R)-2,3-dihydroxy-3-methylbutanoate + NADP(+) = (2S)-2-acetolactate + NADPH + H(+). The enzyme catalyses (2R,3R)-2,3-dihydroxy-3-methylpentanoate + NADP(+) = (S)-2-ethyl-2-hydroxy-3-oxobutanoate + NADPH + H(+). The protein operates within amino-acid biosynthesis; L-isoleucine biosynthesis; L-isoleucine from 2-oxobutanoate: step 2/4. It functions in the pathway amino-acid biosynthesis; L-valine biosynthesis; L-valine from pyruvate: step 2/4. In terms of biological role, involved in the biosynthesis of branched-chain amino acids (BCAA). Catalyzes an alkyl-migration followed by a ketol-acid reduction of (S)-2-acetolactate (S2AL) to yield (R)-2,3-dihydroxy-isovalerate. In the isomerase reaction, S2AL is rearranged via a Mg-dependent methyl migration to produce 3-hydroxy-3-methyl-2-ketobutyrate (HMKB). In the reductase reaction, this 2-ketoacid undergoes a metal-dependent reduction by NADPH to yield (R)-2,3-dihydroxy-isovalerate. The protein is Ketol-acid reductoisomerase (NADP(+)) of Klebsiella pneumoniae subsp. pneumoniae (strain ATCC 700721 / MGH 78578).